Reading from the N-terminus, the 492-residue chain is Catalase-2 (492 aa).

Active-site residues include H65 and N138. Y348 contributes to the heme binding site.

It belongs to the catalase family. Homotetramer and heterotetramer. At least six or seven isozymes are produced from a mixture of 3 gene products. Interacts with NCA1. Interacts with LSD1. Requires heme as cofactor.

The protein localises to the cytoplasm. It localises to the cytosol. It is found in the peroxisome matrix. The enzyme catalyses 2 H2O2 = O2 + 2 H2O. Its function is as follows. Catalyzes the degradation of hydrogen peroxide (H(2)O(2)) generated by peroxisomal oxidases to water and oxygen, thereby protecting cells from the toxic effects of hydrogen peroxide. The polypeptide is Catalase-2 (CAT2) (Arabidopsis thaliana (Mouse-ear cress)).